The sequence spans 369 residues: Dof zinc finger protein DOF2.5 (369 aa).

The Dof-type zinc finger occupies Leu-80 to Arg-134. 4 residues coordinate Zn(2+): Cys-82, Cys-85, Cys-107, and Cys-110. Disordered stretches follow at residues Leu-120 to Ser-149, Glu-203 to Ser-224, Thr-284 to His-304, and Ser-322 to Trp-369. Residues Pro-214–Ser-224 are compositionally biased toward low complexity. Residues Thr-284 to Ser-297 are compositionally biased toward polar residues. The span at Asn-342–Thr-362 shows a compositional bias: low complexity.

As to expression, expressed in the vascular system of the mother plant, but not present in the seed and embryo. In maturing siliques, found all through the funiculus connecting the placenta to the ovule, but not in the ovule.

The protein resides in the nucleus. Functionally, transcription factor specifically involved in the maternal control of seed germination. Regulates transcription by binding to a 5'-AA[AG]G-3' consensus core sequence. May ensure the activation of a component that would trigger germination as a consequence of red light perception. The sequence is that of Dof zinc finger protein DOF2.5 (DOF2.5) from Arabidopsis thaliana (Mouse-ear cress).